The following is a 283-amino-acid chain: Pantothenate synthetase (283 aa).

Position 30 to 37 (30 to 37 (MGYYHAGH)) interacts with ATP. The active-site Proton donor is H37. A (R)-pantoate-binding site is contributed by Q61. Beta-alanine is bound at residue Q61. An ATP-binding site is contributed by 147 to 150 (GQKD). (R)-pantoate is bound at residue Q153. ATP is bound by residues V176 and 184-187 (MSSR).

It belongs to the pantothenate synthetase family. Homodimer.

The protein resides in the cytoplasm. It catalyses the reaction (R)-pantoate + beta-alanine + ATP = (R)-pantothenate + AMP + diphosphate + H(+). It participates in cofactor biosynthesis; (R)-pantothenate biosynthesis; (R)-pantothenate from (R)-pantoate and beta-alanine: step 1/1. Its function is as follows. Catalyzes the condensation of pantoate with beta-alanine in an ATP-dependent reaction via a pantoyl-adenylate intermediate. This Nitratidesulfovibrio vulgaris (strain ATCC 29579 / DSM 644 / CCUG 34227 / NCIMB 8303 / VKM B-1760 / Hildenborough) (Desulfovibrio vulgaris) protein is Pantothenate synthetase.